The sequence spans 342 residues: tRNA (guanine(26)-N(2))-dimethyltransferase (342 aa).

Positions 1 to 336 (MRITEGSAVI…CPYAEVSEIL (336 aa)) constitute a Trm1 methyltransferase domain. Residues R35, R60, and E76 each coordinate S-adenosyl-L-methionine.

It belongs to the class I-like SAM-binding methyltransferase superfamily. Trm1 family.

The enzyme catalyses guanosine(26) in tRNA + 2 S-adenosyl-L-methionine = N(2)-dimethylguanosine(26) in tRNA + 2 S-adenosyl-L-homocysteine + 2 H(+). Functionally, dimethylates a single guanine residue at position 26 of a number of tRNAs using S-adenosyl-L-methionine as donor of the methyl groups. The protein is tRNA (guanine(26)-N(2))-dimethyltransferase of Thermoplasma volcanium (strain ATCC 51530 / DSM 4299 / JCM 9571 / NBRC 15438 / GSS1).